A 257-amino-acid polypeptide reads, in one-letter code: Dihydroorotate dehydrogenase B (NAD(+)), electron transfer subunit (257 aa).

One can recognise an FAD-binding FR-type domain in the interval 2 to 102; that stretch reads IGRERMTVVS…LGPLGHGFPL (101 aa). FAD is bound by residues 53-56, 70-72, and 77-78; these read RPLS, IYR, and GT. Residues cysteine 221, cysteine 226, cysteine 229, and cysteine 244 each coordinate [2Fe-2S] cluster.

The protein belongs to the PyrK family. In terms of assembly, heterotetramer of 2 PyrK and 2 PyrD type B subunits. [2Fe-2S] cluster serves as cofactor. FAD is required as a cofactor.

Its pathway is pyrimidine metabolism; UMP biosynthesis via de novo pathway; orotate from (S)-dihydroorotate (NAD(+) route): step 1/1. Responsible for channeling the electrons from the oxidation of dihydroorotate from the FMN redox center in the PyrD type B subunit to the ultimate electron acceptor NAD(+). The polypeptide is Dihydroorotate dehydrogenase B (NAD(+)), electron transfer subunit (Geobacillus thermodenitrificans (strain NG80-2)).